The sequence spans 136 residues: Transmembrane protein 203 (136 aa).

Residues 1–51 (MLFSLRELVQWLGFATFEIFVHLLALLVFSVLLALRVDGLTPGLSWWNVFV) are interaction with STING1. A run of 4 helical transmembrane segments spans residues 14 to 34 (FATF…VLLA), 50 to 72 (FVPF…VRLF), 81 to 101 (VLRL…EMLL), and 112 to 132 (LWFG…MIRA). The tract at residues 52-136 (PFFAADGLST…LLMIRACRVN (85 aa)) is required for lysosomal localization of the STING-TMEM203 complex.

Homodimer. Interacts with ATP2A2 and ITPR3. Interacts with STIM1 and STING1 (via transmembrane domain).

Its subcellular location is the endoplasmic reticulum membrane. It localises to the endoplasmic reticulum-Golgi intermediate compartment. The protein localises to the lysosome membrane. Its function is as follows. Involved in the regulation of cellular calcium homeotasis. Required for spermatogenesis. Acts as a regulator of STING-mediated inflammatory signaling in macrophages. Forms a complex with STING, promoting the activity of TBK1 kinase and the transcription factor IRF3, leading to activation of type I interferon expression. The sequence is that of Transmembrane protein 203 (Tmem203) from Mus musculus (Mouse).